The primary structure comprises 150 residues: Detocs response regulatory protein DtcB (150 aa).

Residues 2–150 form the Response regulatory domain; that stretch reads KILIADDNIQ…TDLIKKITEL (149 aa). The residue at position 54 (Asp-54) is a 4-aspartylphosphate.

Post-translationally, probably phosphorylated by DtcA.

Its function is as follows. Possible phosphate scavenger member of the two-component regulatory system Detocs that confers resistance to bacteriophage. When the system (DtcA-DtcB-DtcC) is expressed in a susceptible E.coli (strain MG1655) it confers resistance to bacteriophages T2, T4, T5, T7, SECphi4, SECphi6 and SECphi27; the level of resistance varies, resistance to T2, T7 and SECphi4 is not very high. DtcA probably autophosphorylates upon sensing viral infection, and subsequently transfers the phosphate signal to DtcC which activates it, leading to an antiviral defense; DtcB (this subunit) may scavenge phosphorylation signals from accidental activation of DtcA. The polypeptide is Detocs response regulatory protein DtcB (Enterobacter cloacae (strain JD6301)).